The primary structure comprises 353 residues: Guanine nucleotide-binding protein subunit alpha (353 aa).

Residues 1–26 (MGCGMSVEEKEGKARNEEIENQLKRD) are disordered. The N-myristoyl glycine moiety is linked to residue glycine 2. Cysteine 3 carries S-palmitoyl cysteine lipidation. The segment covering 7–26 (VEEKEGKARNEEIENQLKRD) has biased composition (basic and acidic residues). The region spanning 32-353 (NEIKMLLLGA…QENLRLCGLI (322 aa)) is the G-alpha domain. Residues 35-48 (KMLLLGAGESGKST) are G1 motif. The GTP site is built by glutamate 43, serine 44, glycine 45, lysine 46, serine 47, threonine 48, aspartate 150, leucine 175, threonine 181, glycine 203, asparagine 269, lysine 270, aspartate 272, and alanine 325. A Mg(2+)-binding site is contributed by serine 47. Residues 173 to 181 (DVLRSRVKT) are G2 motif. Threonine 181 serves as a coordination point for Mg(2+). The interval 196–205 (YRMFDVGGQR) is G3 motif. The interval 265–272 (ILFLNKID) is G4 motif. The interval 323–328 (TCATDT) is G5 motif.

The protein belongs to the G-alpha family. G(q) subfamily. In terms of assembly, g proteins are composed of 3 units; alpha, beta and gamma. The alpha chain contains the guanine nucleotide binding site. The cofactor is Mg(2+).

Functionally, guanine nucleotide-binding proteins (G proteins) are involved as modulators or transducers in various transmembrane signaling systems. In Sporothrix schenckii (strain ATCC 58251 / de Perez 2211183) (Rose-picker's disease fungus), this protein is Guanine nucleotide-binding protein subunit alpha (SSG-1).